We begin with the raw amino-acid sequence, 135 residues long: Large ribosomal subunit protein uL16c (135 aa).

It belongs to the universal ribosomal protein uL16 family. In terms of assembly, part of the 50S ribosomal subunit.

Its subcellular location is the plastid. The protein localises to the chloroplast. This Nandina domestica (Heavenly bamboo) protein is Large ribosomal subunit protein uL16c.